A 183-amino-acid chain; its full sequence is Adenine phosphoribosyltransferase (183 aa).

This sequence belongs to the purine/pyrimidine phosphoribosyltransferase family. Homodimer.

The protein resides in the cytoplasm. It carries out the reaction AMP + diphosphate = 5-phospho-alpha-D-ribose 1-diphosphate + adenine. Its pathway is purine metabolism; AMP biosynthesis via salvage pathway; AMP from adenine: step 1/1. Its function is as follows. Catalyzes a salvage reaction resulting in the formation of AMP, that is energically less costly than de novo synthesis. The protein is Adenine phosphoribosyltransferase of Escherichia fergusonii (strain ATCC 35469 / DSM 13698 / CCUG 18766 / IAM 14443 / JCM 21226 / LMG 7866 / NBRC 102419 / NCTC 12128 / CDC 0568-73).